We begin with the raw amino-acid sequence, 271 residues long: Structure-specific endonuclease subunit SLX1 (271 aa).

One can recognise a GIY-YIG domain in the interval 9–94; the sequence is RFFGVYLLYC…PQASRRLTHV (86 aa). An SLX1-type zinc finger spans residues 182–234; sequence CTLCARMLQDEEGPLCCPHPGCPLRAHIICLAEEFLQEEPGQLLPLEGHCPSC.

The protein belongs to the SLX1 family. In terms of assembly, forms a heterodimer with SLX4. Requires a divalent metal cation as cofactor.

The protein localises to the nucleus. Its function is as follows. Catalytic subunit of the SLX1-SLX4 structure-specific endonuclease that resolves DNA secondary structures generated during DNA repair and recombination. Has endonuclease activity towards branched DNA substrates, introducing single-strand cuts in duplex DNA close to junctions with ss-DNA. Has a preference for 5'-flap structures, and promotes symmetrical cleavage of static and migrating Holliday junctions (HJs). Resolves HJs by generating two pairs of ligatable, nicked duplex products. In Rattus norvegicus (Rat), this protein is Structure-specific endonuclease subunit SLX1 (Slx1b).